The primary structure comprises 269 residues: Tryptophan synthase alpha chain (269 aa).

Active-site proton acceptor residues include glutamate 49 and aspartate 60.

Belongs to the TrpA family. As to quaternary structure, tetramer of two alpha and two beta chains.

The catalysed reaction is (1S,2R)-1-C-(indol-3-yl)glycerol 3-phosphate + L-serine = D-glyceraldehyde 3-phosphate + L-tryptophan + H2O. The protein operates within amino-acid biosynthesis; L-tryptophan biosynthesis; L-tryptophan from chorismate: step 5/5. The alpha subunit is responsible for the aldol cleavage of indoleglycerol phosphate to indole and glyceraldehyde 3-phosphate. The protein is Tryptophan synthase alpha chain of Cronobacter sakazakii (strain ATCC BAA-894) (Enterobacter sakazakii).